The primary structure comprises 93 residues: uncharacterized protein (93 aa).

This is an uncharacterized protein from Treponema pallidum (strain Nichols).